The chain runs to 349 residues: GDSL esterase/lipase At2g19050 (349 aa).

An N-terminal signal peptide occupies residues 1–23 (MAEAIFKALLLVIATTAFATTEA). The Nucleophile role is filled by serine 38. Asparagine 49 is a glycosylation site (N-linked (GlcNAc...) asparagine). Active-site residues include aspartate 316 and histidine 319.

The protein belongs to the 'GDSL' lipolytic enzyme family.

Its subcellular location is the secreted. In Arabidopsis thaliana (Mouse-ear cress), this protein is GDSL esterase/lipase At2g19050.